The following is a 536-amino-acid chain: SNW domain-containing protein 1 (536 aa).

The disordered stretch occupies residues 1 to 46 (MALTSFLPAPTQLSQDQLEAEEKARSQRSRQTSLVSSRREPPPYGY). An N-acetylalanine modification is found at alanine 2. Serine 14 is modified (phosphoserine). Residue lysine 23 forms a Glycyl lysine isopeptide (Lys-Gly) (interchain with G-Cter in SUMO2) linkage. Residues 59–79 (GDGGAFPEIHVAQYPLDMGRK) form an interaction with PPIL1 region. Residues lysine 81, lysine 97, lysine 115, lysine 122, lysine 141, lysine 158, and lysine 170 each participate in a glycyl lysine isopeptide (Lys-Gly) (interchain with G-Cter in SUMO2) cross-link. The interval 174–339 (AQYIRYTPSQ…KARERRAGIK (166 aa)) is SNW. Phosphoserine occurs at positions 182 and 190. Lysine 193 participates in a covalent cross-link: Glycyl lysine isopeptide (Lys-Gly) (interchain with G-Cter in SUMO2). The disordered stretch occupies residues 209–233 (PPRFKINKKIPRGPPSPPAPVMHSP). A phosphoserine mark is found at serine 224, serine 232, and serine 234. Glycyl lysine isopeptide (Lys-Gly) (interchain with G-Cter in SUMO2) cross-links involve residues lysine 240, lysine 258, lysine 286, lysine 339, lysine 344, lysine 416, and lysine 441. The interval 311 to 386 (KMAQKEKEKH…RSKLQRNENR (76 aa)) is disordered. Serine 446 carries the phosphoserine modification. A Glycyl lysine isopeptide (Lys-Gly) (interchain with G-Cter in SUMO2) cross-link involves residue lysine 452. Basic and acidic residues-rich tracts occupy residues 470-489 (NRFV…RGRE) and 503-530 (KFLE…EHEG). The segment at 470–536 (NRFVPDKEFS…EHEGKKRRKE (67 aa)) is disordered. 2 positions are modified to phosphoserine: serine 479 and serine 481. A Glycyl lysine isopeptide (Lys-Gly) (interchain with G-Cter in SUMO2) cross-link involves residue lysine 509.

It belongs to the SNW family. In terms of assembly, identified in the spliceosome C complex. Associates with U4/U6-U5 tri-small nuclear ribonucleoproteins (U4/U6-U5 tri-snRNPs). Component of the minor spliceosome, which splices U12-type introns. Interacts with SKI, SMAD2,SMAD3, RBPJ, RB1, PABPN1, MAGEA1, SIRT1, FOXN3, U2AF2, DAXX and ATP1B4. Interacts with PPIL1. Interacts with VDR and RXRA; preferentially associates with VDR:RXRA heterodimers. Interacts with NCOR2. Interacts with MAML1. Interacts with NOTCH1 NICD; the interaction involves multimerized NOTCH1 NICD. Forms a complex with NOTCH1 NICD and MAML1; the association is dissociated by RBPJ. Associates with positive transcription elongation factor b (P-TEFb). Component of the SNARP complex which consists at least of SNIP1, SNW1, THRAP3, BCLAF1 and PNN. As to quaternary structure, (Microbial infection) Interacts with human papillomavirus type-16 (HPV16) E7 protein. (Microbial infection) Interacts with EBV EBNA2; EBNA2 competes with NCOR2 for interaction with SNW1.

It is found in the nucleus. In terms of biological role, involved in pre-mRNA splicing as component of the spliceosome. As a component of the minor spliceosome, involved in the splicing of U12-type introns in pre-mRNAs. Required for the specific splicing of CDKN1A pre-mRNA; the function probably involves the recruitment of U2AF2 to the mRNA. May recruit PPIL1 to the spliceosome. May be involved in cyclin-D1/CCND1 mRNA stability through the SNARP complex which associates with both the 3'end of the CCND1 gene and its mRNA. Involved in transcriptional regulation. Modulates TGF-beta-mediated transcription via association with SMAD proteins, MYOD1-mediated transcription via association with PABPN1, RB1-mediated transcriptional repression, and retinoid-X receptor (RXR)- and vitamin D receptor (VDR)-dependent gene transcription in a cell line-specific manner probably involving coactivators NCOA1 and GRIP1. Is involved in NOTCH1-mediated transcriptional activation. Binds to multimerized forms of Notch intracellular domain (NICD) and is proposed to recruit transcriptional coactivators such as MAML1 to form an intermediate preactivation complex which associates with DNA-bound CBF-1/RBPJ to form a transcriptional activation complex by releasing SNW1 and redundant NOTCH1 NICD. (Microbial infection) Is recruited by HIV-1 Tat to Tat:P-TEFb:TAR RNA complexes and is involved in Tat transcription by recruitment of MYC, MEN1 and TRRAP to the HIV promoter. Functionally, (Microbial infection) Proposed to be involved in transcriptional activation by EBV EBNA2 of CBF-1/RBPJ-repressed promoters. The sequence is that of SNW domain-containing protein 1 (SNW1) from Homo sapiens (Human).